We begin with the raw amino-acid sequence, 1026 residues long: Maternal effect protein staufen (1026 aa).

Basic residues predominate over residues 16–29; that stretch reads AAHHHSHSHAHMHL. 3 disordered regions span residues 16–159, 190–210, and 234–311; these read AAHH…QLPP, NHYG…SNYA, and TPVP…KDKT. Over residues 70-111 the composition is skewed to low complexity; the sequence is AQQQQQQQTSSNQAGAVAAAGAAYHHGNINSNSGSNISSNSN. Polar residues predominate over residues 112-126; the sequence is QMQKIRQQHQHLSSS. 2 stretches are compositionally biased toward low complexity: residues 192–210 and 234–256; these read YGSN…SNYA and TPVP…NSTV. Basic and acidic residues predominate over residues 267–284; that stretch reads TSQKPETRQEPASADDHV. The segment covering 285–303 has biased composition (polar residues); sequence STGNIDATGALSNEDTSSS. DRBM domains follow at residues 311-378 and 490-557; these read TPMC…ETMY and PKFP…VLKT. Residues serine 563 and serine 570 each carry the phosphoserine modification. Residues 578-645 enclose the DRBM 3 domain; sequence SPISQVHEIG…AEKMLVELQK (68 aa). The RNA site is built by histidine 606, lysine 608, lysine 628, lysine 629, and lysine 632. Residues 647 to 707 form a disordered region; sequence PPLTPTKQTP…PPKDKLIDMD (61 aa). Residues threonine 650 and threonine 655 each carry the phosphothreonine modification. Serine 676 is modified (phosphoserine). The segment covering 678–688 has biased composition (polar residues); sequence VSGTDGPTQTG. The 71-residue stretch at 711 to 781 folds into the DRBM 4 domain; that stretch reads NPITKLIQLQ…AQALFELLEA (71 aa). The interval 855–948 is disordered; it reads ESKEEEANKE…SNSTSNTQSA (94 aa). The segment covering 864-890 has biased composition (low complexity); the sequence is EVAVAAEENSNNSANSGDSSNSSSGDS. Polar residues predominate over residues 891–901; that stretch reads QATEAASESAL. Composition is skewed to low complexity over residues 902–920 and 934–947; these read NTST…SNVG and NTES…NTQS. The DRBM 5 domain maps to 951 to 1018; it reads HMKEQLLYLS…ASNALKILSK (68 aa).

In terms of assembly, component of neuronal ribonucleoprotein complexes (RNPs) that contains at least various translational repressor and mRNA turnover proteins such as me31B, tral, Upf1, AGO2 and sometimes Fmr1. In terms of tissue distribution, polar granules at the posterior pole of the oocyte, and by the time the egg is laid, at the anterior pole.

It is found in the cytoplasm. Its subcellular location is the cytoplasmic ribonucleoprotein granule. Its function is as follows. RNA-binding protein which forms ribonucleoprotein complexes (RNPs) that play critical roles in the localization, translational repression and turnover of RNAs during embryogenesis, neurotransmission and neurogenesis. In the oocyte, essential for the localization of both the osk/oskar mRNA to the posterior pole and bcd/bicoid RNA to the anterior pole, and is therefore required for the correct anterior-posterior patterning of the developing embryo. Association with osk or bcd at their respective poles, appears to promote the formation and stabilization of the ribonucleoprotein complexes. Integral component of diverse neuritic ribonucleoprotein complexes (RNPs) that mediate the transport, translation and turnover of neuronal RNAs during neuorgenesis and the translation repression of synaptic transcripts in preparation for their dendritic targeting. The chain is Maternal effect protein staufen (stau) from Drosophila melanogaster (Fruit fly).